Reading from the N-terminus, the 578-residue chain is Suppressor of smlA (578 aa).

Involved in regulation of group size of aggregation streams. The chain is Suppressor of smlA (sslA1) from Dictyostelium discoideum (Social amoeba).